A 261-amino-acid chain; its full sequence is Serine/arginine-rich splicing factor 12 (261 aa).

The RRM domain maps to 10–88; it reads TSLFIRNVAD…RQIEIQFAQG (79 aa). Positions 86–261 are disordered; that stretch reads AQGDRKTPGQ…SRSYRHKNSW (176 aa). Residues 88–109 show a composition bias toward basic and acidic residues; it reads GDRKTPGQMKSKERHPCSPSDH. Basic residues-rich tracts occupy residues 110-122 and 178-191; these read RRSR…RTRS and GRSR…RSKS. The span at 192 to 209 shows a compositional bias: low complexity; it reads IGKSQSSSPQKQTSSGTK. Residues 230–239 are compositionally biased toward polar residues; it reads GYTNSETKVQ. Basic residues predominate over residues 240-261; sequence TAKHSHFRSHSRSRSYRHKNSW.

This sequence belongs to the splicing factor SR family. In terms of tissue distribution, expressed in testis.

The protein localises to the nucleus. In terms of biological role, splicing factor that seems to antagonize SR proteins in pre-mRNA splicing regulation. This Homo sapiens (Human) protein is Serine/arginine-rich splicing factor 12 (SRSF12).